The sequence spans 338 residues: Ketol-acid reductoisomerase (NADP(+)) (338 aa).

Positions 1-181 (MHVYYDKDCD…GGGRTGIIET (181 aa)) constitute a KARI N-terminal Rossmann domain. Residues 24–27 (YGSQ), Arg47, Ser50, Thr52, and 82–85 (DEFQ) each bind NADP(+). Residue His107 is part of the active site. Gly133 provides a ligand contact to NADP(+). Residues 182-327 (TFKDETETDL…AKLRAMMPWI (146 aa)) form the KARI C-terminal knotted domain. Residues Asp190, Glu194, Glu226, and Glu230 each coordinate Mg(2+). Ser251 serves as a coordination point for substrate.

Belongs to the ketol-acid reductoisomerase family. Requires Mg(2+) as cofactor.

It catalyses the reaction (2R)-2,3-dihydroxy-3-methylbutanoate + NADP(+) = (2S)-2-acetolactate + NADPH + H(+). It carries out the reaction (2R,3R)-2,3-dihydroxy-3-methylpentanoate + NADP(+) = (S)-2-ethyl-2-hydroxy-3-oxobutanoate + NADPH + H(+). It functions in the pathway amino-acid biosynthesis; L-isoleucine biosynthesis; L-isoleucine from 2-oxobutanoate: step 2/4. It participates in amino-acid biosynthesis; L-valine biosynthesis; L-valine from pyruvate: step 2/4. In terms of biological role, involved in the biosynthesis of branched-chain amino acids (BCAA). Catalyzes an alkyl-migration followed by a ketol-acid reduction of (S)-2-acetolactate (S2AL) to yield (R)-2,3-dihydroxy-isovalerate. In the isomerase reaction, S2AL is rearranged via a Mg-dependent methyl migration to produce 3-hydroxy-3-methyl-2-ketobutyrate (HMKB). In the reductase reaction, this 2-ketoacid undergoes a metal-dependent reduction by NADPH to yield (R)-2,3-dihydroxy-isovalerate. The chain is Ketol-acid reductoisomerase (NADP(+)) from Cellvibrio japonicus (strain Ueda107) (Pseudomonas fluorescens subsp. cellulosa).